A 260-amino-acid chain; its full sequence is Phosphoribosylaminoimidazole-succinocarboxamide synthase (260 aa).

This sequence belongs to the SAICAR synthetase family.

The enzyme catalyses 5-amino-1-(5-phospho-D-ribosyl)imidazole-4-carboxylate + L-aspartate + ATP = (2S)-2-[5-amino-1-(5-phospho-beta-D-ribosyl)imidazole-4-carboxamido]succinate + ADP + phosphate + 2 H(+). It participates in purine metabolism; IMP biosynthesis via de novo pathway; 5-amino-1-(5-phospho-D-ribosyl)imidazole-4-carboxamide from 5-amino-1-(5-phospho-D-ribosyl)imidazole-4-carboxylate: step 1/2. The polypeptide is Phosphoribosylaminoimidazole-succinocarboxamide synthase (Pelagibacter ubique (strain HTCC1062)).